Here is a 531-residue protein sequence, read N- to C-terminus: Apolipoprotein N-acyltransferase (531 aa).

The next 7 helical transmembrane spans lie at 8–28, 34–54, 69–89, 105–125, 136–156, 178–198, and 207–227; these read IILLSGVSRAFVGFLAGLLAV, FGIFAAAFVSFPVLVWLIDGV, PAAIGWSFGFGYFLGGLWWLG, LAVVGLPAVLGVFYALAVVIA, IAALALGFGIAEWLRGFVFTG, VVNLSTINMLAVFVFAAPALI, and GLAIAVALFTAHIAFGFYRLA. Residues 243-493 form the CN hydrolase domain; the sequence is VQPVIDQAKK…RGVLDTILPG (251 aa). E287 serves as the catalytic Proton acceptor. The active site involves K351. Catalysis depends on C405, which acts as the Nucleophile. The chain crosses the membrane as a helical span at residues 507 to 527; the sequence is IFWLSMAILSIVASFSRFGFN.

The protein belongs to the CN hydrolase family. Apolipoprotein N-acyltransferase subfamily.

The protein resides in the cell inner membrane. The catalysed reaction is N-terminal S-1,2-diacyl-sn-glyceryl-L-cysteinyl-[lipoprotein] + a glycerophospholipid = N-acyl-S-1,2-diacyl-sn-glyceryl-L-cysteinyl-[lipoprotein] + a 2-acyl-sn-glycero-3-phospholipid + H(+). It participates in protein modification; lipoprotein biosynthesis (N-acyl transfer). Its function is as follows. Catalyzes the phospholipid dependent N-acylation of the N-terminal cysteine of apolipoprotein, the last step in lipoprotein maturation. In Sinorhizobium medicae (strain WSM419) (Ensifer medicae), this protein is Apolipoprotein N-acyltransferase.